A 340-amino-acid chain; its full sequence is Major histocompatibility complex class I-related protein 1 (340 aa).

The N-terminal stretch at 1 to 22 (MGELTAFLLPLIIVLMVKHSNS) is a signal peptide. Residues 23–109 (RTHSLRYFRL…KRLQRHYNHS (87 aa)) are alpha-1. The interval 23 to 201 (RTHSLRYFRL…EYGKDTLQRT (179 aa)) is antigen-binding cleft. Over 23-302 (RTHSLRYFRL…QESEAIPLVM (280 aa)) the chain is Extracellular. Positions 29 and 31 each coordinate 8-(9H-purin-6-yl)-2-oxa-8-azabicyclo[3.3.1]nona-3,6-diene-4,6-dicarbaldehyde. 3 residues coordinate 5-(2-oxoethylideneamino)-6-(D-ribitylamino)uracil: Arg-31, Ser-46, and Lys-65. The 5-(2-oxopropylideneamino)-6-(D-ribitylamino)uracil site is built by Arg-31, Ser-46, and Lys-65. Residues Arg-31, Ser-46, and Lys-65 each coordinate 7-hydroxy-6-methyl-8-(1-D-ribityl)lumazine. 2 residues coordinate 8-(9H-purin-6-yl)-2-oxa-8-azabicyclo[3.3.1]nona-3,6-diene-4,6-dicarbaldehyde: Lys-65 and His-80. 2-amino-4-oxopteridine-6-carbaldehyde is bound at residue Lys-65. Pyridoxal is bound at residue Lys-65. Asn-107 is a glycosylation site (N-linked (GlcNAc...) asparagine). The alpha-2 stretch occupies residues 110-201 (GSHTYQRMIG…EYGKDTLQRT (92 aa)). Arg-116 is a binding site for 8-(9H-purin-6-yl)-2-oxa-8-azabicyclo[3.3.1]nona-3,6-diene-4,6-dicarbaldehyde. Arg-116, Tyr-174, and Gln-175 together coordinate 5-(2-oxoethylideneamino)-6-(D-ribitylamino)uracil. The 5-(2-oxopropylideneamino)-6-(D-ribitylamino)uracil site is built by Arg-116, Tyr-174, and Gln-175. 7-hydroxy-6-methyl-8-(1-D-ribityl)lumazine-binding residues include Arg-116, Tyr-174, and Gln-175. Disulfide bonds link Cys-120–Cys-183 and Cys-222–Cys-278. The tract at residues 202 to 293 (EPPLVRVNRK…GVHVVLQVPQ (92 aa)) is alpha-3. One can recognise an Ig-like C1-type domain in the interval 203-282 (PPLVRVNRKE…SNLYSCHVEH (80 aa)). The segment at 294 to 302 (ESEAIPLVM) is connecting peptide. A helical transmembrane segment spans residues 303–323 (KAVSGSIVFVIVLAGVGVLVW). Topologically, residues 324-340 (RRRPREQNGAVYLPTPD) are cytoplasmic.

It belongs to the MHC class I family. Heterotrimer that consists of MR1, B2M and metabolite antigen. Major classes of metabolite ligands presented by MR1 include riboflavin-related antigens, pyrimidines and ribityl lumazines, nucleobase adducts and folate derivatives. Forms reversible covalent Schiff base complexes with microbial pyrimidine-based metabolite, which serves as a molecular switch triggering complete folding, stable association with B2M and translocation of the ternary complex from endoplasmic reticulum to the plasma membrane. Alternatively, forms non-Schiff base complexes with ribityl lumazines. On antigen-presenting cells, the ternary complex interacts with TCR on MR1-restricted T cells. Interacts with TAPBP and TAPBPL chaperones in the endoplasmic reticulum. TAPBP associated or not with MHC class I peptide loading complex binds ligand-free MR1 or MR1-B2M complex, providing for stable MR1 pools ready for metabolite antigen processing. TAPBPL interacts with MR1 in a ligand-independent way; this interaction may stabilize MR1 pool and facilitate ligand loading and dissociation. Structurally, MR1-B2M heterodimer adopts a topology similar to classical MHC class I molecules, with alpha-1 and alpha-2 domains of MR1 forming the antigen-binding cleft composed of two alpha-helices resting on a floor of 7-stranded anti-parallel beta-pleated sheet. MR1-B2M heterodimer (via alpha-helices) interacts with TCR (via CDR domains). N-glycosylated.

Its subcellular location is the cell membrane. The protein localises to the endoplasmic reticulum membrane. The protein resides in the golgi apparatus membrane. It localises to the early endosome membrane. It is found in the late endosome membrane. Antigen-presenting molecule specialized in displaying microbial pyrimidine-based metabolites to alpha-beta T cell receptors (TCR) on innate-type mucosal-associated invariant T (MAIT) cells. In complex with B2M preferentially presents riboflavin-derived metabolites to semi-invariant TCRs on MAIT cells, guiding immune surveillance of the microbial metabolome at mucosal epithelial barriers. Signature pyrimidine-based microbial antigens are generated via non-enzymatic condensation of metabolite intermediates of the riboflavin pathway with by-products arising from other metabolic pathways such as glycolysis. Typical potent antigenic metabolites are 5-(2-oxoethylideneamino)-6-D-ribitylaminouracil (5-OE-RU) and 5-(2-oxopropylideneamino)-6-D-ribitylaminouracil (5-OP-RU), products of condensation of 5-amino-6-D-ribityaminouracil (5-A-RU) with glyoxal or methylglyoxal by-products, respectively. May present microbial antigens to various MAIT cell subsets, providing for unique recognition of diverse microbes, including pathogens that do not synthesize riboflavin. Upon antigen recognition, elicits rapid innate-type MAIT cell activation to eliminate pathogenic microbes by directly killing infected cells. During T cell development, drives thymic selection and post-thymic terminal differentiation of MAIT cells in a process dependent on commensal microflora. Acts as an immune sensor of cancer cell metabolome. May present a tumor-specific or -associated metabolite essential for cancer cell survival to a pan-cancer TCR on a non-MAIT CD8-positive T cell clone, triggering T cell-mediated killing of a wide range of cancer cell types. May present tumor-enriched pyridoxal and pyridoxal 5'-phosphate antigens, enabling preferential recognition of cancer cells. Presents nucleobase carbonyl adducts generated during oxidative stress. Captures M3Ade, a nucleobase adduct composed of one adenine modified by a malondialdehyde trimer, for recognition by MR1-restricted T cell clones expressing a polyclonal TCR repertoire. The chain is Major histocompatibility complex class I-related protein 1 from Pongo abelii (Sumatran orangutan).